Consider the following 303-residue polypeptide: N-acetyl-D-glucosamine kinase (303 aa).

ATP-binding positions include 4-11 (GFDIGGTK) and 133-140 (GVGGGLIF). Residues histidine 157, cysteine 177, cysteine 179, and cysteine 184 each coordinate Zn(2+).

Belongs to the ROK (NagC/XylR) family. NagK subfamily.

The catalysed reaction is N-acetyl-D-glucosamine + ATP = N-acetyl-D-glucosamine 6-phosphate + ADP + H(+). It functions in the pathway cell wall biogenesis; peptidoglycan recycling. In terms of biological role, catalyzes the phosphorylation of N-acetyl-D-glucosamine (GlcNAc) derived from cell-wall degradation, yielding GlcNAc-6-P. The polypeptide is N-acetyl-D-glucosamine kinase (Escherichia coli O6:H1 (strain CFT073 / ATCC 700928 / UPEC)).